The primary structure comprises 164 residues: Lipoprotein signal peptidase (164 aa).

A run of 4 helical transmembrane segments spans residues 11–31 (YWVLALAAIVLDQWSKWAVLS), 41–61 (VIPSFFDLTLVYNPGAAFSFL), 64–84 (QGGWQKYFFLVLAVAVSAYLV), and 92–112 (FATLGKTGAAMIIGGALGNVI). Residues Asp122 and Asp140 contribute to the active site. The chain crosses the membrane as a helical span at residues 132 to 152 (FYPAFNIADSFICVGAVLAVL).

It belongs to the peptidase A8 family.

It is found in the cell inner membrane. It catalyses the reaction Release of signal peptides from bacterial membrane prolipoproteins. Hydrolyzes -Xaa-Yaa-Zaa-|-(S,diacylglyceryl)Cys-, in which Xaa is hydrophobic (preferably Leu), and Yaa (Ala or Ser) and Zaa (Gly or Ala) have small, neutral side chains.. Its pathway is protein modification; lipoprotein biosynthesis (signal peptide cleavage). Functionally, this protein specifically catalyzes the removal of signal peptides from prolipoproteins. The polypeptide is Lipoprotein signal peptidase (Neisseria meningitidis serogroup C (strain 053442)).